The chain runs to 250 residues: Ribosomal RNA small subunit methyltransferase J (250 aa).

S-adenosyl-L-methionine is bound by residues 101–102, 117–118, 153–154, and D171; these read RD, ER, and SS.

Belongs to the methyltransferase superfamily. RsmJ family.

It localises to the cytoplasm. It catalyses the reaction guanosine(1516) in 16S rRNA + S-adenosyl-L-methionine = N(2)-methylguanosine(1516) in 16S rRNA + S-adenosyl-L-homocysteine + H(+). Its function is as follows. Specifically methylates the guanosine in position 1516 of 16S rRNA. The sequence is that of Ribosomal RNA small subunit methyltransferase J from Escherichia coli O81 (strain ED1a).